A 217-amino-acid polypeptide reads, in one-letter code: Homeobox protein Hox-B7 (217 aa).

Positions 126-131 (IYPWMR) match the Antp-type hexapeptide motif. Positions 137-196 (RKRGRQTYTRYQTLELEKEFHYNRYLTRRRRIEIAHTLCLTERQIKIWFQNRRMKWKKEN) form a DNA-binding region, homeobox. A disordered region spans residues 194–217 (KENKTAGPGTTGQDRAEAEEEEEE).

This sequence belongs to the Antp homeobox family. Forms a DNA-binding heterodimer with transcription factor PBX1.

It localises to the nucleus. Functionally, sequence-specific transcription factor which is part of a developmental regulatory system that provides cells with specific positional identities on the anterior-posterior axis. The chain is Homeobox protein Hox-B7 (HOXB7) from Homo sapiens (Human).